The sequence spans 431 residues: Isochorismate synthase MenF (431 aa).

K183 serves as the catalytic Proton acceptor. E233 functions as the Proton donor in the catalytic mechanism. Residues E277 and E414 each contribute to the Mg(2+) site.

This sequence belongs to the isochorismate synthase family. Mg(2+) serves as cofactor.

The enzyme catalyses chorismate = isochorismate. The protein operates within quinol/quinone metabolism; 1,4-dihydroxy-2-naphthoate biosynthesis; 1,4-dihydroxy-2-naphthoate from chorismate: step 1/7. It participates in quinol/quinone metabolism; menaquinone biosynthesis. Catalyzes the conversion of chorismate to isochorismate. This Pasteurella multocida (strain Pm70) protein is Isochorismate synthase MenF.